A 371-amino-acid chain; its full sequence is Dual-specificity RNA methyltransferase RlmN (371 aa).

E92 serves as the catalytic Proton acceptor. Positions 98 to 337 (EADRATLCVS…VTVRKTRGDD (240 aa)) constitute a Radical SAM core domain. A disulfide bridge links C105 with C342. 3 residues coordinate [4Fe-4S] cluster: C112, C116, and C119. S-adenosyl-L-methionine is bound by residues 166–167 (GE), S198, 220–222 (SLH), and N299. The S-methylcysteine intermediate role is filled by C342.

The protein belongs to the radical SAM superfamily. RlmN family. Requires [4Fe-4S] cluster as cofactor.

Its subcellular location is the cytoplasm. The catalysed reaction is adenosine(2503) in 23S rRNA + 2 reduced [2Fe-2S]-[ferredoxin] + 2 S-adenosyl-L-methionine = 2-methyladenosine(2503) in 23S rRNA + 5'-deoxyadenosine + L-methionine + 2 oxidized [2Fe-2S]-[ferredoxin] + S-adenosyl-L-homocysteine. It carries out the reaction adenosine(37) in tRNA + 2 reduced [2Fe-2S]-[ferredoxin] + 2 S-adenosyl-L-methionine = 2-methyladenosine(37) in tRNA + 5'-deoxyadenosine + L-methionine + 2 oxidized [2Fe-2S]-[ferredoxin] + S-adenosyl-L-homocysteine. In terms of biological role, specifically methylates position 2 of adenine 2503 in 23S rRNA and position 2 of adenine 37 in tRNAs. m2A2503 modification seems to play a crucial role in the proofreading step occurring at the peptidyl transferase center and thus would serve to optimize ribosomal fidelity. The chain is Dual-specificity RNA methyltransferase RlmN from Actinobacillus succinogenes (strain ATCC 55618 / DSM 22257 / CCUG 43843 / 130Z).